A 776-amino-acid polypeptide reads, in one-letter code: Conserved oligomeric Golgi complex subunit 4 (776 aa).

A phosphoserine mark is found at S342 and S345.

The protein belongs to the COG4 family. In terms of assembly, component of the conserved oligomeric Golgi complex which is composed of eight different subunits and is required for normal Golgi morphology and localization.

The protein localises to the golgi apparatus membrane. In terms of biological role, required for normal Golgi function. The protein is Conserved oligomeric Golgi complex subunit 4 of Drosophila melanogaster (Fruit fly).